The sequence spans 165 residues: Zinc finger C2H2 protein ECU11_0990 (165 aa).

Composition is skewed to basic and acidic residues over residues 1-10 (MEAESPKERV) and 19-32 (DPER…DTSS). The segment at 1–38 (MEAESPKERVQGVSGESWDPERGVKEREDTSSKKGKGV) is disordered. C2H2-type zinc fingers lie at residues 103–125 (FGCE…KAQH) and 136–158 (LFCP…SRYH).

This chain is Zinc finger C2H2 protein ECU11_0990, found in Encephalitozoon cuniculi (strain GB-M1) (Microsporidian parasite).